A 93-amino-acid polypeptide reads, in one-letter code: MNGIKYAVFTDKSIRLLGKNQYTFNVESGSTRTEIKHWVELFFDVKVIAMNSHRLPVKGRRVRPIMGHTMHYRRMIITLQPGYSIPPLRKKRT.

The protein belongs to the universal ribosomal protein uL23 family. Part of the 50S ribosomal subunit.

The protein resides in the plastid. It localises to the chloroplast. Functionally, binds to 23S rRNA. The sequence is that of Large ribosomal subunit protein uL23cz/uL23cy (rpl23-A) from Phaseolus angularis (Azuki bean).